Here is a 262-residue protein sequence, read N- to C-terminus: E3 ubiquitin-protein ligase NEURL3 (262 aa).

The 157-residue stretch at 17–173 (ALRFHAEAKG…TTKAIELLDP (157 aa)) folds into the NHR domain. The RING-type zinc-finger motif lies at 202-241 (CAICFYHAANTRLVPCGHTYFCRYCAWRVFSDTAKCPVCR).

In terms of assembly, (Microbial infection) Interacts with hepatitis C virus protein E1; this interaction prevents E1 interaction with E2 and subsequently inhibits viral infection.

The protein localises to the cytoplasm. It catalyses the reaction S-ubiquitinyl-[E2 ubiquitin-conjugating enzyme]-L-cysteine + [acceptor protein]-L-lysine = [E2 ubiquitin-conjugating enzyme]-L-cysteine + N(6)-ubiquitinyl-[acceptor protein]-L-lysine.. Its pathway is protein modification; protein ubiquitination. E3 ubiquitin-protein ligase that plays a role in various biological processes such as lung development or innate immunity. Seems to utilize UBE2E1. Promotes innate antiviral response by catalyzing 'Lys-63'-linked ubiquitination of IRF7. Also inhibits hepatitis C virus assembly by directly binding to viral E1 envelope glycoprotein to disrupt its interaction with E2. Plays an essential role in TLR4-mediated activation of MAPK pathways by promoting 'Lys-48'-linked polyubiquitination of the phosphatase DUSP1/MKP1. The chain is E3 ubiquitin-protein ligase NEURL3 (NEURL3) from Homo sapiens (Human).